Here is a 201-residue protein sequence, read N- to C-terminus: Glutathione peroxidase 1 (201 aa).

Residues S7 and S32 each carry the phosphoserine modification. Residue U47 is part of the active site. Position 47 (U47) is a non-standard amino acid, selenocysteine. Residues K62, K86, and K112 each carry the N6-acetyllysine; alternate modification. An N6-succinyllysine; alternate mark is found at K62, K86, and K112. K119 carries the N6-acetyllysine modification. An N6-acetyllysine; alternate modification is found at K146. At K146 the chain carries N6-succinyllysine; alternate. S195 carries the phosphoserine modification.

The protein belongs to the glutathione peroxidase family. In terms of assembly, homotetramer. Interacts with MIEN1. Post-translationally, during periods of oxidative stress, Sec-47 may react with a superoxide radical, irreversibly lose hydroselenide and be converted to dehydroalanine. As to expression, expressed in liver, kidney, lung, brain and heart.

The protein resides in the cytoplasm. Its subcellular location is the mitochondrion. It carries out the reaction 2 glutathione + H2O2 = glutathione disulfide + 2 H2O. The catalysed reaction is a hydroperoxy polyunsaturated fatty acid + 2 glutathione = a hydroxy polyunsaturated fatty acid + glutathione disulfide + H2O. It catalyses the reaction tert-butyl hydroperoxide + 2 glutathione = tert-butanol + glutathione disulfide + H2O. The enzyme catalyses cumene hydroperoxide + 2 glutathione = 2-phenylpropan-2-ol + glutathione disulfide + H2O. It carries out the reaction (13S)-hydroperoxy-(9Z,11E)-octadecadienoate + 2 glutathione = (13S)-hydroxy-(9Z,11E)-octadecadienoate + glutathione disulfide + H2O. The catalysed reaction is (9S)-hydroperoxy-(10E,12Z)-octadecadienoate + 2 glutathione = (9S)-hydroxy-(10E,12Z)-octadecadienoate + glutathione disulfide + H2O. It catalyses the reaction (5S)-hydroperoxy-(6E,8Z,11Z,14Z)-eicosatetraenoate + 2 glutathione = (5S)-hydroxy-(6E,8Z,11Z,14Z)-eicosatetraenoate + glutathione disulfide + H2O. The enzyme catalyses (12S)-hydroperoxy-(5Z,8Z,10E,14Z)-eicosatetraenoate + 2 glutathione = (12S)-hydroxy-(5Z,8Z,10E,14Z)-eicosatetraenoate + glutathione disulfide + H2O. It carries out the reaction (12R)-hydroperoxy-(5Z,8Z,10E,14Z)-eicosatetraenoate + 2 glutathione = (12R)-hydroxy-(5Z,8Z,10E,14Z)-eicosatetraenoate + glutathione disulfide + H2O. The catalysed reaction is (15S)-hydroperoxy-(5Z,8Z,11Z,13E)-eicosatetraenoate + 2 glutathione = (15S)-hydroxy-(5Z,8Z,11Z,13E)-eicosatetraenoate + glutathione disulfide + H2O. It catalyses the reaction (5S)-hydroperoxy-(6E,8Z,11Z,14Z,17Z)-eicosapentaenoate + 2 glutathione = (5S)-hydroxy-(6E,8Z,11Z,14Z,17Z)-eicosapentaenoate + glutathione disulfide + H2O. The enzyme catalyses (12S)-hydroperoxy-(5Z,8Z,10E,14Z,17Z)-eicosapentaenoate + 2 glutathione = (12S)-hydroxy-(5Z,8Z,10E,14Z,17Z)-eicosapentaenoate + glutathione disulfide + H2O. It carries out the reaction (15S)-hydroperoxy-(5Z,8Z,11Z,13E,17Z)-eicosapentaenoate + 2 glutathione = (15S)-hydroxy-(5Z,8Z,11Z,13E,17Z)-eicosapentaenoate + glutathione disulfide + H2O. The catalysed reaction is (15S)-hydroperoxy-(11Z,13E)-eicosadienoate + 2 glutathione = (15S)-hydroxy-(11Z,13E)-eicosadienoate + glutathione disulfide + H2O. It catalyses the reaction (17S)-hydroperoxy-(4Z,7Z,10Z,13Z,15E,19Z)-docosahexaenoate + 2 glutathione = (17S)-hydroxy-(4Z,7Z,10Z,13Z,15E,19Z)-docosahexaenoate + glutathione disulfide + H2O. In terms of biological role, catalyzes the reduction of hydroperoxides in a glutathione-dependent manner thus regulating cellular redox homeostasis. Can reduce small soluble hydroperoxides such as H2O2, cumene hydroperoxide and tert-butyl hydroperoxide, as well as several fatty acid-derived hydroperoxides. In platelets catalyzes the reduction of 12-hydroperoxyeicosatetraenoic acid, the primary product of the arachidonate 12-lipoxygenase pathway. This Mus musculus (Mouse) protein is Glutathione peroxidase 1.